Here is a 187-residue protein sequence, read N- to C-terminus: Crossover junction endodeoxyribonuclease RuvC (187 aa).

Residues aspartate 7, glutamate 67, and aspartate 140 contribute to the active site. Mg(2+) is bound by residues aspartate 7, glutamate 67, and aspartate 140.

It belongs to the RuvC family. As to quaternary structure, homodimer which binds Holliday junction (HJ) DNA. The HJ becomes 2-fold symmetrical on binding to RuvC with unstacked arms; it has a different conformation from HJ DNA in complex with RuvA. In the full resolvosome a probable DNA-RuvA(4)-RuvB(12)-RuvC(2) complex forms which resolves the HJ. Mg(2+) serves as cofactor.

The protein resides in the cytoplasm. It carries out the reaction Endonucleolytic cleavage at a junction such as a reciprocal single-stranded crossover between two homologous DNA duplexes (Holliday junction).. The RuvA-RuvB-RuvC complex processes Holliday junction (HJ) DNA during genetic recombination and DNA repair. Endonuclease that resolves HJ intermediates. Cleaves cruciform DNA by making single-stranded nicks across the HJ at symmetrical positions within the homologous arms, yielding a 5'-phosphate and a 3'-hydroxyl group; requires a central core of homology in the junction. The consensus cleavage sequence is 5'-(A/T)TT(C/G)-3'. Cleavage occurs on the 3'-side of the TT dinucleotide at the point of strand exchange. HJ branch migration catalyzed by RuvA-RuvB allows RuvC to scan DNA until it finds its consensus sequence, where it cleaves and resolves the cruciform DNA. The sequence is that of Crossover junction endodeoxyribonuclease RuvC from Prosthecochloris aestuarii (strain DSM 271 / SK 413).